A 198-amino-acid chain; its full sequence is Guanylate kinase (198 aa).

Gly2 bears the N-acetylglycine mark. One can recognise a Guanylate kinase-like domain in the interval 4–186 (PRPVVLSGPS…AYWALKEALS (183 aa)). Position 14 to 19 (14 to 19 (GAGKST)) interacts with ATP. Position 37–51 (37–51 (SHTTRDPRPGEENGK)) interacts with substrate. Residues Arg44, Arg137, and Arg148 contribute to the active site. ATP is bound at residue 171–172 (ND).

This sequence belongs to the guanylate kinase family. As to quaternary structure, monomer. Interacts with RD3.

The protein localises to the photoreceptor inner segment. Its subcellular location is the cytoplasm. It is found in the cytosol. It catalyses the reaction GMP + ATP = GDP + ADP. With respect to regulation, up-regulated by RD3. In terms of biological role, catalyzes the phosphorylation of GMP to GDP. Essential enzyme for recycling GMP and indirectly, cyclic GMP (cGMP). Involved in the cGMP metabolism in photoreceptors. In Sus scrofa (Pig), this protein is Guanylate kinase (GUK1).